The sequence spans 86 residues: Small ribosomal subunit protein uS17 (86 aa).

It belongs to the universal ribosomal protein uS17 family. As to quaternary structure, part of the 30S ribosomal subunit.

Its function is as follows. One of the primary rRNA binding proteins, it binds specifically to the 5'-end of 16S ribosomal RNA. This chain is Small ribosomal subunit protein uS17, found in Tropheryma whipplei (strain TW08/27) (Whipple's bacillus).